The following is a 97-amino-acid chain: DNA-directed RNA polymerase subunit omega (97 aa).

This sequence belongs to the RNA polymerase subunit omega family. The RNAP catalytic core consists of 2 alpha, 1 beta, 1 beta' and 1 omega subunit. When a sigma factor is associated with the core the holoenzyme is formed, which can initiate transcription.

The enzyme catalyses RNA(n) + a ribonucleoside 5'-triphosphate = RNA(n+1) + diphosphate. In terms of biological role, promotes RNA polymerase assembly. Latches the N- and C-terminal regions of the beta' subunit thereby facilitating its interaction with the beta and alpha subunits. The polypeptide is DNA-directed RNA polymerase subunit omega (Coxiella burnetii (strain CbuK_Q154) (Coxiella burnetii (strain Q154))).